The following is a 311-amino-acid chain: MANSTSFLGCSRFYATFEENLKLMGQLVYLIPSFILISKMIYVIQVKHRGDYHEQRRFWLLYTMDLALSLLNLFFDIFYYRLTLFVPQICESFSFFLRANPLLIDITYPLWFYFHVGKMVAQMSISFERMTFNLLKPNDYRRIWKHGLTACVIMIIFVPFSIIWNILISDKYIQFYFGGFQPNYSRRVNWFGTTAWQLTYMQISMAVTLLSNIVTGAILWKSQNQSRKSRLLCRIWFAISTEYLLSACAFCYLHMKTFAFDYSNLIFMLVIFVWDGFNILSPVIMISMNKSLRKQVFAMSGGSEDLEISVA.

7 helical membrane-spanning segments follow: residues 24-44, 58-78, 101-121, 148-168, 200-220, 235-255, and 266-286; these read MGQL…IYVI, FWLL…FDIF, PLLI…KMVA, LTAC…NILI, YMQI…AILW, IWFA…YLHM, and IFML…VIMI.

It belongs to the nematode receptor-like protein srg family.

Its subcellular location is the membrane. This Caenorhabditis elegans protein is Serpentine receptor class gamma-6 (srg-6).